The sequence spans 206 residues: Thiamine-phosphate synthase (206 aa).

4-amino-2-methyl-5-(diphosphooxymethyl)pyrimidine contacts are provided by residues 36 to 40 and asparagine 68; that span reads QLRAK. 2 residues coordinate Mg(2+): aspartate 69 and aspartate 88. Serine 105 contributes to the 4-amino-2-methyl-5-(diphosphooxymethyl)pyrimidine binding site. A 2-[(2R,5Z)-2-carboxy-4-methylthiazol-5(2H)-ylidene]ethyl phosphate-binding site is contributed by 131-133; the sequence is TPT. Position 134 (lysine 134) interacts with 4-amino-2-methyl-5-(diphosphooxymethyl)pyrimidine. Residue glycine 162 participates in 2-[(2R,5Z)-2-carboxy-4-methylthiazol-5(2H)-ylidene]ethyl phosphate binding.

It belongs to the thiamine-phosphate synthase family. The cofactor is Mg(2+).

The enzyme catalyses 2-[(2R,5Z)-2-carboxy-4-methylthiazol-5(2H)-ylidene]ethyl phosphate + 4-amino-2-methyl-5-(diphosphooxymethyl)pyrimidine + 2 H(+) = thiamine phosphate + CO2 + diphosphate. It catalyses the reaction 2-(2-carboxy-4-methylthiazol-5-yl)ethyl phosphate + 4-amino-2-methyl-5-(diphosphooxymethyl)pyrimidine + 2 H(+) = thiamine phosphate + CO2 + diphosphate. It carries out the reaction 4-methyl-5-(2-phosphooxyethyl)-thiazole + 4-amino-2-methyl-5-(diphosphooxymethyl)pyrimidine + H(+) = thiamine phosphate + diphosphate. It functions in the pathway cofactor biosynthesis; thiamine diphosphate biosynthesis; thiamine phosphate from 4-amino-2-methyl-5-diphosphomethylpyrimidine and 4-methyl-5-(2-phosphoethyl)-thiazole: step 1/1. In terms of biological role, condenses 4-methyl-5-(beta-hydroxyethyl)thiazole monophosphate (THZ-P) and 2-methyl-4-amino-5-hydroxymethyl pyrimidine pyrophosphate (HMP-PP) to form thiamine monophosphate (TMP). This is Thiamine-phosphate synthase from Thermus thermophilus (strain ATCC BAA-163 / DSM 7039 / HB27).